Here is an 89-residue protein sequence, read N- to C-terminus: U1-hexatoxin-Iw1e (89 aa).

An N-terminal signal peptide occupies residues Met1–Ala18. 5 cysteine pairs are disulfide-bonded: Cys21–Cys32, Cys26–Cys40, Cys31–Cys66, Cys50–Cys74, and Cys68–Cys81. Positions Arg87–Glu89 are excised as a propeptide.

Belongs to the MIT-like AcTx family. Expressed by the venom gland.

The protein localises to the secreted. The chain is U1-hexatoxin-Iw1e from Illawarra wisharti (Illawarra funnel-web spider).